Here is a 129-residue protein sequence, read N- to C-terminus: Large ribosomal subunit protein bL20 (129 aa).

This sequence belongs to the bacterial ribosomal protein bL20 family.

Functionally, binds directly to 23S ribosomal RNA and is necessary for the in vitro assembly process of the 50S ribosomal subunit. It is not involved in the protein synthesizing functions of that subunit. This is Large ribosomal subunit protein bL20 from Mycobacterium tuberculosis (strain ATCC 25177 / H37Ra).